Here is a 181-residue protein sequence, read N- to C-terminus: NADH-quinone oxidoreductase subunit I (181 aa).

4Fe-4S ferredoxin-type domains follow at residues 51-80 and 90-119; these read TRNS…LKKS and KSFQ…LTPD. [4Fe-4S] cluster-binding residues include Cys60, Cys63, Cys66, Cys70, Cys99, Cys102, Cys105, and Cys109.

It belongs to the complex I 23 kDa subunit family. NDH-1 is composed of 13 different subunits. Subunits NuoA, H, J, K, L, M, N constitute the membrane sector of the complex. Requires [4Fe-4S] cluster as cofactor.

It localises to the cell membrane. It carries out the reaction a quinone + NADH + 5 H(+)(in) = a quinol + NAD(+) + 4 H(+)(out). In terms of biological role, NDH-1 shuttles electrons from NADH, via FMN and iron-sulfur (Fe-S) centers, to quinones in the respiratory chain. The immediate electron acceptor for the enzyme in this species is believed to be ubiquinone. Couples the redox reaction to proton translocation (for every two electrons transferred, four hydrogen ions are translocated across the cytoplasmic membrane), and thus conserves the redox energy in a proton gradient. This chain is NADH-quinone oxidoreductase subunit I, found in Buchnera aphidicola subsp. Cinara cedri (strain Cc).